A 442-amino-acid polypeptide reads, in one-letter code: MTAPTAIRRLNAADPDFARHLDHLLSWESVSDDSVNQRVLDIIKAVRERGDAALVEFTQRFDGLQVASMADLILPRERLELALTRITVAQREALEKAAARVRSYHEKQKQDSWTYTEADGTVLGQKVTPLDRAGLYVPGGKASYPSSVLMNAIPAKVAGVTEVVMVVPTPRGEVNELVLAAACIAGVDRVFTIGGAQAVAALAYGTESVPQVDKVVGPGNIYVATAKRHVFGQVGIDMIAGPSEILVVCDGQTDPDWIAMDLFSQAEHDEDAQAILVSPDAEFLDKVAASIAKLLPTMERAEIINTSINGRGALIKVRDMQQAIEVANRIAPEHLELSVADPQAWLPQIRHAGAIFMGRHTSEALGDYCAGPNHVLPTSGTARFSSPLGVYDFQKRSSIIFCSEQGASELGRTASVLARGESLTAHARSAEYRIVDDQDQGQ.

3 residues coordinate NAD(+): tyrosine 136, glutamine 197, and asparagine 220. The substrate site is built by serine 243, glutamine 265, and histidine 268. 2 residues coordinate Zn(2+): glutamine 265 and histidine 268. Catalysis depends on proton acceptor residues glutamate 333 and histidine 334. The substrate site is built by histidine 334, aspartate 367, glutamate 421, and histidine 426. Residue aspartate 367 participates in Zn(2+) binding. Residue histidine 426 coordinates Zn(2+).

Belongs to the histidinol dehydrogenase family. Requires Zn(2+) as cofactor.

It catalyses the reaction L-histidinol + 2 NAD(+) + H2O = L-histidine + 2 NADH + 3 H(+). Its pathway is amino-acid biosynthesis; L-histidine biosynthesis; L-histidine from 5-phospho-alpha-D-ribose 1-diphosphate: step 9/9. Catalyzes the sequential NAD-dependent oxidations of L-histidinol to L-histidinaldehyde and then to L-histidine. The protein is Histidinol dehydrogenase of Pseudomonas fluorescens (strain ATCC BAA-477 / NRRL B-23932 / Pf-5).